Here is a 206-residue protein sequence, read N- to C-terminus: Probable GTP-binding protein EngB (206 aa).

The EngB-type G domain maps to 8-195 (RDAEVVLVGR…EECLRTRFHE (188 aa)). GTP contacts are provided by residues 16–23 (GRSNVGKS), 41–45 (GVTRQ), 60–63 (DLPG), 140–143 (NKTD), and 175–177 (ICA). 2 residues coordinate Mg(2+): serine 23 and threonine 43.

This sequence belongs to the TRAFAC class TrmE-Era-EngA-EngB-Septin-like GTPase superfamily. EngB GTPase family. Mg(2+) serves as cofactor.

Its function is as follows. Necessary for normal cell division and for the maintenance of normal septation. The protein is Probable GTP-binding protein EngB of Halorubrum lacusprofundi (strain ATCC 49239 / DSM 5036 / JCM 8891 / ACAM 34).